Reading from the N-terminus, the 94-residue chain is Alpha-galactosyl-binding lectin (94 aa).

As to quaternary structure, homodimer. Post-translationally, contains three disulfide bonds.

Functionally, alpha-galactosyl-binding lectin with preference for galactose-alpha-1,4-galactose. The sequence is that of Alpha-galactosyl-binding lectin from Lyophyllum decastes (Fried chicken mushroom).